Here is a 78-residue protein sequence, read N- to C-terminus: UPF0270 protein YE3952 (78 aa).

The protein belongs to the UPF0270 family.

This Yersinia enterocolitica serotype O:8 / biotype 1B (strain NCTC 13174 / 8081) protein is UPF0270 protein YE3952.